A 354-amino-acid polypeptide reads, in one-letter code: Methionine aminotransferase BCAT4 (354 aa).

An N6-(pyridoxal phosphate)lysine modification is found at Lys198.

Belongs to the class-IV pyridoxal-phosphate-dependent aminotransferase family. It depends on pyridoxal 5'-phosphate as a cofactor. In terms of tissue distribution, mostly expressed in phloem.

The protein resides in the cytoplasm. It carries out the reaction a 2-oxocarboxylate + L-methionine = 4-methylsulfanyl-2-oxobutanoate + an L-alpha-amino acid. Functionally, converts 2-oxo acids to branched-chain amino acids. Shows activity with L-Leu, L-Ile and L-Val as amino donors and alpha-keto-glutarate as an amino acceptor, but no activity for D-isomers of Leu, Ile, Val, Asp, Glu or Ala. Acts on methionine and its derivatives and the corresponding 2-oxo acids. Catalyzes the initial deamination of methionine to 4-methylthio-2-oxobutyrate as well as the transamination of other typical intermediates of the methionine chain elongation pathway. This chain is Methionine aminotransferase BCAT4 (BCAT4), found in Arabidopsis thaliana (Mouse-ear cress).